The primary structure comprises 313 residues: tRNA dimethylallyltransferase (313 aa).

Residue 11-18 (GPTAGGKT) participates in ATP binding. 13 to 18 (TAGGKT) contacts substrate. Interaction with substrate tRNA regions lie at residues 36-39 (DSAL), 160-164 (QRIGR), and 243-248 (RCVGYR).

Belongs to the IPP transferase family. Monomer. Mg(2+) is required as a cofactor.

It carries out the reaction adenosine(37) in tRNA + dimethylallyl diphosphate = N(6)-dimethylallyladenosine(37) in tRNA + diphosphate. Functionally, catalyzes the transfer of a dimethylallyl group onto the adenine at position 37 in tRNAs that read codons beginning with uridine, leading to the formation of N6-(dimethylallyl)adenosine (i(6)A). The polypeptide is tRNA dimethylallyltransferase (Neisseria meningitidis serogroup B (strain ATCC BAA-335 / MC58)).